A 310-amino-acid chain; its full sequence is Olfactory receptor 2A7 (310 aa).

Residues 1–24 (MGNNMTLITEFILLGFPLSPRMQM) are Extracellular-facing. Asparagine 4 is a glycosylation site (N-linked (GlcNAc...) asparagine). Residues 25 to 45 (LLFALFSLFYAFTLLGNGTIV) traverse the membrane as a helical segment. At 46 to 53 (GLICLDSR) the chain is on the cytoplasmic side. A helical transmembrane segment spans residues 54–74 (LHTPMYFFLSHLAIVDIAYAC). Topologically, residues 75-96 (NTVPQMLVNLLDPVKPISYAGC) are extracellular. Cysteine 96 and cysteine 178 are oxidised to a cystine. Residues 97-117 (MTQTFLFLTFAITECLLLVVM) traverse the membrane as a helical segment. The Cytoplasmic segment spans residues 118-148 (SYDRYVAICHPLRYSAIMSWRVCSTMAVTSW). Residues 149 to 169 (IIGVLLSLIHLVLLLPLPFCV) traverse the membrane as a helical segment. At 170 to 204 (SQKVNHFFCEITAILKLACADTHLNETMVLAGAVS) the chain is on the extracellular side. Asparagine 194 carries an N-linked (GlcNAc...) asparagine glycan. A helical transmembrane segment spans residues 205-225 (VLVGPFSSIVVSYACILGAIL). Residues 226–239 (KIQSEEGQRKAFST) lie on the Cytoplasmic side of the membrane. The helical transmembrane segment at 240 to 260 (CSSHLCVVGLFYGTAIVMYVG) threads the bilayer. Topologically, residues 261-273 (PRHGSPKEQKKYL) are extracellular. Residues 274–291 (LLFHSLFNPMLNPLIYSL) traverse the membrane as a helical segment. The Cytoplasmic portion of the chain corresponds to 292 to 310 (RNSDVKNTLKRVLRTQRAL).

This sequence belongs to the G-protein coupled receptor 1 family. As to expression, olfactory epithelium.

The protein resides in the cell membrane. Functionally, odorant receptor. The sequence is that of Olfactory receptor 2A7 from Mus musculus (Mouse).